The primary structure comprises 270 residues: Phosphatidate cytidylyltransferase (270 aa).

7 consecutive transmembrane segments (helical) span residues 19 to 39, 53 to 73, 76 to 96, 101 to 121, 126 to 146, 183 to 203, and 248 to 268; these read LWLT…IGLA, TAFS…LLIL, GALL…VTQW, GWPA…SLLR, FGFT…IAAY, LVAS…ALLL, and ALLY…AIFF.

Belongs to the CDS family.

It localises to the cell inner membrane. The enzyme catalyses a 1,2-diacyl-sn-glycero-3-phosphate + CTP + H(+) = a CDP-1,2-diacyl-sn-glycerol + diphosphate. It participates in phospholipid metabolism; CDP-diacylglycerol biosynthesis; CDP-diacylglycerol from sn-glycerol 3-phosphate: step 3/3. The polypeptide is Phosphatidate cytidylyltransferase (cdsA) (Brucella melitensis biotype 1 (strain ATCC 23456 / CCUG 17765 / NCTC 10094 / 16M)).